The following is a 439-amino-acid chain: MIGSPVKPLFVFVLTFSLLLVVILLSPSPHILQIPFPSGSSVGSSDIWSVKRIMEWRPCKWWLQGHLTPLPAKTNGYIRVDCYGGLNQMRRDLCDGVGIARLLNATLVLPKFEVAAYWNESSGFADVFDVDYFIQKMSGYIEVVKELPKDIASKEPFKVDCSKRKGQFDYIESVLPLLLEHHYISFTPAMSQRRDRYPEYARATLCQACYSAIHLTSSLEKKAVELFDAIPKPFLSLHLRFEPDMVAYSQCEYPNLSPSSIAAIEAARADRKPWTGELAQTWRKRGKCPLTPNETVLMLQSLNIPTSTNIYLAAGDGLMEMEGFTSVYTNVFTKSVLLNQEDFTRMHGNTKAALDYHVSINSDAYVATYFGNMDKIVAAMRTYKQMHNTLFLSRKAFAELTSQGLEGAELKKALWEVHKSDFAIGRGFALPDCFCEFEL.

Residues 8 to 28 (PLFVFVLTFSLLLVVILLSPS) traverse the membrane as a helical; Signal-anchor for type II membrane protein segment. Residues Asn104 and Asn119 are each glycosylated (N-linked (GlcNAc...) asparagine). 238–240 (HLR) provides a ligand contact to substrate. An N-linked (GlcNAc...) asparagine glycan is attached at Asn293.

Belongs to the glycosyltransferase GT106 family.

It localises to the membrane. Its pathway is glycan metabolism. This chain is O-fucosyltransferase 13, found in Arabidopsis thaliana (Mouse-ear cress).